We begin with the raw amino-acid sequence, 408 residues long: LL-diaminopimelate aminotransferase (408 aa).

2 residues coordinate substrate: tyrosine 15 and glycine 42. Pyridoxal 5'-phosphate-binding positions include tyrosine 72, 108 to 109, tyrosine 132, asparagine 187, tyrosine 218, and 246 to 248; these read SK and SFS. The substrate site is built by lysine 109, tyrosine 132, and asparagine 187. Lysine 249 carries the post-translational modification N6-(pyridoxal phosphate)lysine. Residues arginine 257 and asparagine 292 each contribute to the pyridoxal 5'-phosphate site. Substrate-binding residues include asparagine 292 and arginine 388.

This sequence belongs to the class-I pyridoxal-phosphate-dependent aminotransferase family. LL-diaminopimelate aminotransferase subfamily. In terms of assembly, homodimer. The cofactor is pyridoxal 5'-phosphate.

It catalyses the reaction (2S,6S)-2,6-diaminopimelate + 2-oxoglutarate = (S)-2,3,4,5-tetrahydrodipicolinate + L-glutamate + H2O + H(+). It functions in the pathway amino-acid biosynthesis; L-lysine biosynthesis via DAP pathway; LL-2,6-diaminopimelate from (S)-tetrahydrodipicolinate (aminotransferase route): step 1/1. In terms of biological role, involved in the synthesis of meso-diaminopimelate (m-DAP or DL-DAP), required for both lysine and peptidoglycan biosynthesis. Catalyzes the direct conversion of tetrahydrodipicolinate to LL-diaminopimelate. This chain is LL-diaminopimelate aminotransferase, found in Prochlorococcus marinus (strain MIT 9301).